Consider the following 452-residue polypeptide: Phosphoglucosamine mutase (452 aa).

The Phosphoserine intermediate role is filled by S104. 4 residues coordinate Mg(2+): S104, D246, D248, and D250. Phosphoserine is present on S104.

The protein belongs to the phosphohexose mutase family. The cofactor is Mg(2+). Post-translationally, activated by phosphorylation.

It catalyses the reaction alpha-D-glucosamine 1-phosphate = D-glucosamine 6-phosphate. Its function is as follows. Catalyzes the conversion of glucosamine-6-phosphate to glucosamine-1-phosphate. This chain is Phosphoglucosamine mutase, found in Streptomyces coelicolor (strain ATCC BAA-471 / A3(2) / M145).